The chain runs to 199 residues: Large ribosomal subunit protein uL4 (199 aa).

Belongs to the universal ribosomal protein uL4 family. In terms of assembly, part of the 50S ribosomal subunit.

Its function is as follows. One of the primary rRNA binding proteins, this protein initially binds near the 5'-end of the 23S rRNA. It is important during the early stages of 50S assembly. It makes multiple contacts with different domains of the 23S rRNA in the assembled 50S subunit and ribosome. Functionally, forms part of the polypeptide exit tunnel. In Aquifex pyrophilus, this protein is Large ribosomal subunit protein uL4.